A 188-amino-acid polypeptide reads, in one-letter code: Single-stranded DNA-binding protein DdrB (188 aa).

The tract at residues 140–188 (YAVPGGAAGNGQGRPAPQGQPAQARPQATAARPAARPPVQPGQEEETPF) is disordered. Residues 152-173 (GRPAPQGQPAQARPQATAARPA) are compositionally biased toward low complexity.

As to quaternary structure, homopentamer arranged in a ring-structure; DNA binds between subunits and along the top of the ring. The pentamers self-associate to coat ssDNA in higher-ordered structures; oligomerization facilitates the assembly of extended nucleoprotein complexes. Self-assembly does not however require ssDNA-binding. Interacts with SSB.

In terms of biological role, ssDNA-binding protein that contributes to the ionizing radiation resistance of D.radiodurans. Plays a role in DNA repair and genome reconstitution in a RecA-independent process. Required for recovery from severe genomic fragmentation as a result of exposure to severe levels of ionizing radiation. Binds ssDNA but not dsDNA. Stimulates annealing of complementary ssDNA. Does not complement an ssb disruption. The polypeptide is Single-stranded DNA-binding protein DdrB (ddrB) (Deinococcus radiodurans (strain ATCC 13939 / DSM 20539 / JCM 16871 / CCUG 27074 / LMG 4051 / NBRC 15346 / NCIMB 9279 / VKM B-1422 / R1)).